The primary structure comprises 503 residues: U6 snRNA (guanine-N(2))-methyltransferase THUMPD2 (503 aa).

A THUMP domain is found at 161 to 266; that stretch reads CQLEKQIKEE…DIYSVVGIPV (106 aa).

The protein belongs to the methyltransferase superfamily. In terms of assembly, part of the heterodimeric THUMPD2-TRM112 methyltransferase complex; this complex forms an active tRNA methyltransferase, where TRMT112 acts as an activator of the catalytic subunit THUMPD2. As to expression, expressed in a variety of tissues including brain, colon, gingiva, heart, kidney, liver, lung, placenta, small intestine, spleen and thymus.

The protein localises to the nucleus. It catalyses the reaction guanosine in U6 snRNA + S-adenosyl-L-methionine = N(2)-methylguanosine in U6 snRNA + S-adenosyl-L-homocysteine + H(+). Its function is as follows. Catalytic subunit of the THUMPD2-TRM112 methyltransferase complex, that specifically mediates the S-adenosyl-L-methionine-dependent N(2)-methylation of guanosine nucleotides, most probably at position 72 (m2G72), in the U6snRNA of the major spliceosome. This modification in the U6 snRNA affects the constitutive splicing efficiency of introns that have suboptimal splice sites and can impact final mRNA levels. The sequence is that of U6 snRNA (guanine-N(2))-methyltransferase THUMPD2 from Homo sapiens (Human).